The following is a 248-amino-acid chain: Type III pantothenate kinase (248 aa).

Residue 8–15 participates in ATP binding; sequence DAGNTRTK. Residues Tyr-87 and 94–97 contribute to the substrate site; that span reads GVDR. Catalysis depends on Asp-96, which acts as the Proton acceptor. Thr-119 is a binding site for ATP. Substrate is bound at residue Thr-173.

This sequence belongs to the type III pantothenate kinase family. As to quaternary structure, homodimer. NH4(+) is required as a cofactor. K(+) serves as cofactor.

The protein resides in the cytoplasm. It catalyses the reaction (R)-pantothenate + ATP = (R)-4'-phosphopantothenate + ADP + H(+). It functions in the pathway cofactor biosynthesis; coenzyme A biosynthesis; CoA from (R)-pantothenate: step 1/5. Catalyzes the phosphorylation of pantothenate (Pan), the first step in CoA biosynthesis. This is Type III pantothenate kinase from Methylobacillus flagellatus (strain ATCC 51484 / DSM 6875 / VKM B-1610 / KT).